We begin with the raw amino-acid sequence, 291 residues long: Orotidine 5'-phosphate decarboxylase (291 aa).

Lys-97 functions as the Proton donor in the catalytic mechanism.

Belongs to the OMP decarboxylase family. Type 2 subfamily.

The catalysed reaction is orotidine 5'-phosphate + H(+) = UMP + CO2. It participates in pyrimidine metabolism; UMP biosynthesis via de novo pathway; UMP from orotate: step 2/2. This is Orotidine 5'-phosphate decarboxylase from Clostridium kluyveri (strain ATCC 8527 / DSM 555 / NBRC 12016 / NCIMB 10680 / K1).